A 135-amino-acid polypeptide reads, in one-letter code: Large ribosomal subunit protein uL22 (135 aa).

Residues 112 to 135 (KKPEKKKLKAKSAKTEEAPKAAEV) are disordered. Over residues 124–135 (AKTEEAPKAAEV) the composition is skewed to basic and acidic residues.

The protein belongs to the universal ribosomal protein uL22 family. Part of the 50S ribosomal subunit.

Functionally, this protein binds specifically to 23S rRNA; its binding is stimulated by other ribosomal proteins, e.g. L4, L17, and L20. It is important during the early stages of 50S assembly. It makes multiple contacts with different domains of the 23S rRNA in the assembled 50S subunit and ribosome. Its function is as follows. The globular domain of the protein is located near the polypeptide exit tunnel on the outside of the subunit, while an extended beta-hairpin is found that lines the wall of the exit tunnel in the center of the 70S ribosome. This Brachyspira hyodysenteriae (strain ATCC 49526 / WA1) protein is Large ribosomal subunit protein uL22.